The sequence spans 258 residues: Trans-aconitate 2-methyltransferase (258 aa).

It belongs to the methyltransferase superfamily. Tam family.

It localises to the cytoplasm. It carries out the reaction trans-aconitate + S-adenosyl-L-methionine = (E)-3-(methoxycarbonyl)pent-2-enedioate + S-adenosyl-L-homocysteine. Its function is as follows. Catalyzes the S-adenosylmethionine monomethyl esterification of trans-aconitate. This chain is Trans-aconitate 2-methyltransferase, found in Yersinia pseudotuberculosis serotype O:1b (strain IP 31758).